A 282-amino-acid chain; its full sequence is ATP phosphoribosyltransferase (282 aa).

The protein belongs to the ATP phosphoribosyltransferase family. Long subfamily. The cofactor is Mg(2+).

The protein localises to the cytoplasm. The enzyme catalyses 1-(5-phospho-beta-D-ribosyl)-ATP + diphosphate = 5-phospho-alpha-D-ribose 1-diphosphate + ATP. Its pathway is amino-acid biosynthesis; L-histidine biosynthesis; L-histidine from 5-phospho-alpha-D-ribose 1-diphosphate: step 1/9. Its activity is regulated as follows. Feedback inhibited by histidine. Functionally, catalyzes the condensation of ATP and 5-phosphoribose 1-diphosphate to form N'-(5'-phosphoribosyl)-ATP (PR-ATP). Has a crucial role in the pathway because the rate of histidine biosynthesis seems to be controlled primarily by regulation of HisG enzymatic activity. This is ATP phosphoribosyltransferase from Pyrobaculum aerophilum (strain ATCC 51768 / DSM 7523 / JCM 9630 / CIP 104966 / NBRC 100827 / IM2).